The primary structure comprises 740 residues: Polyribonucleotide nucleotidyltransferase (740 aa).

Mg(2+) is bound by residues Asp-514 and Asp-520. Positions 580-639 (PRIITVKIPVDKIGEVIGPKRQMINQIQEDTGAEITIEDDGTIYIGAADGPAAEAARATI) constitute a KH domain. The region spanning 651–723 (GERILGSVVK…SRGKLSLIPV (73 aa)) is the S1 motif domain.

This sequence belongs to the polyribonucleotide nucleotidyltransferase family. In terms of assembly, homotrimer. It depends on Mg(2+) as a cofactor.

The protein localises to the cytoplasm. It carries out the reaction RNA(n+1) + phosphate = RNA(n) + a ribonucleoside 5'-diphosphate. Functionally, involved in mRNA degradation. Catalyzes the phosphorolysis of single-stranded polyribonucleotides processively in the 3'- to 5'-direction. This is Polyribonucleotide nucleotidyltransferase from Streptomyces antibioticus.